A 555-amino-acid polypeptide reads, in one-letter code: Cyclin-T1.2 (555 aa).

Disordered stretches follow at residues 315-429 and 505-555; these read SYKG…NSSK and PADS…GELV. Residues 321–335 show a composition bias toward low complexity; the sequence is KPLSNSSDSPSTRPS. Positions 341 to 359 are enriched in basic and acidic residues; it reads KNQKVVEQELMEQRMKEAA. The span at 382-398 shows a compositional bias: low complexity; that stretch reads TSSSASNNSNHQNRSSS. A compositionally biased stretch (pro residues) spans 521–543; sequence PDEPSPPVSQILLPPPPPPPILP.

This sequence belongs to the cyclin family. Cyclin C subfamily.

Its function is as follows. Regulatory subunit of the cyclin-dependent kinase pair (CDK9/cyclin T) complex, also called positive transcription elongation factor B (P-TEFb), which is proposed to facilitate the transition from abortive to production elongation by phosphorylating the CTD (carboxy-terminal domain) of the large subunit of RNA polymerase II (RNAP II). This chain is Cyclin-T1.2 (cit-1.2), found in Caenorhabditis elegans.